We begin with the raw amino-acid sequence, 210 residues long: 23 kDa jasmonate-induced protein (210 aa).

It belongs to the jasmonate-induced protein family.

This is 23 kDa jasmonate-induced protein from Hordeum vulgare (Barley).